Reading from the N-terminus, the 140-residue chain is MNSVCFATPHTKHMDSKMQLTSSPASLWRPWLVTRKDAQTECRRTKLACPYSRPEVPGNTTTDGKMQSFQHPVRLYWPRSKSFDYLFSDGEALLRNFPVQATINFYDESDSEDEEESCDEDDESDVEDCLKHNSHFTAFN.

Positions 28–31 (WRPW) match the WRPW motif; required for gro2-binding motif. The tract at residues 71–106 (HPVRLYWPRSKSFDYLFSDGEALLRNFPVQATINFY) is ripply homology domain. A disordered region spans residues 107 to 126 (DESDSEDEEESCDEDDESDV).

The protein belongs to the ripply family. As to quaternary structure, interacts with gro2 via the WRPW motif. As to expression, expressed in the embryonic anterior presomitic mesoderm and in newly formed somites.

Its subcellular location is the nucleus. Plays a role in somitogenesis. Essential for transcriptional repression of the segmental patterning genes, thus terminating the segmentation program in the presomitic mesoderm, and also required for the maintenance of rostrocaudal polarity in somites. The polypeptide is Protein ripply1 (Danio rerio (Zebrafish)).